We begin with the raw amino-acid sequence, 571 residues long: Carboxylesterase 3 (571 aa).

A signal peptide spans 1 to 26 (MERAVRVESGVLVGVVCLLLACPATA). C97 and C124 are joined by a disulfide. The N-linked (GlcNAc...) asparagine glycan is linked to N105. The active-site Acyl-ester intermediate is the S229. An intrachain disulfide couples C281 to C292. Catalysis depends on charge relay system residues E347 and H460. Positions 568 to 571 (QEDL) match the Prevents secretion from ER motif.

The protein belongs to the type-B carboxylesterase/lipase family. Post-translationally, N-glycosylated. In terms of tissue distribution, expressed in liver, colon and small intestine.

The protein localises to the endoplasmic reticulum lumen. The catalysed reaction is a carboxylic ester + H2O = an alcohol + a carboxylate + H(+). Involved in the detoxification of xenobiotics and in the activation of ester and amide prodrugs. Shows low catalytic efficiency for hydrolysis of CPT-11 (7-ethyl-10-[4-(1-piperidino)-1-piperidino]-carbonyloxycamptothecin), a prodrug for camptothecin used in cancer therapeutics. The polypeptide is Carboxylesterase 3 (CES3) (Homo sapiens (Human)).